Here is a 95-residue protein sequence, read N- to C-terminus: MSFTFQTEVRADLGKGASRRLRRAEQVPAILYGAGQEAVSLVLDHNKVITAQQEAAFYSEVLTLVVDGKEVKVKVAAVQRHPVKPKVVHLDFIRA.

Belongs to the bacterial ribosomal protein bL25 family. As to quaternary structure, part of the 50S ribosomal subunit; part of the 5S rRNA/L5/L18/L25 subcomplex. Contacts the 5S rRNA. Binds to the 5S rRNA independently of L5 and L18.

In terms of biological role, this is one of the proteins that binds to the 5S RNA in the ribosome where it forms part of the central protuberance. This chain is Large ribosomal subunit protein bL25, found in Tolumonas auensis (strain DSM 9187 / NBRC 110442 / TA 4).